Consider the following 309-residue polypeptide: Homoserine O-succinyltransferase (309 aa).

The active-site Acyl-thioester intermediate is the cysteine 142. Lysine 163 and serine 192 together coordinate substrate. Histidine 235 (proton acceptor) is an active-site residue. The active site involves glutamate 237. Position 249 (arginine 249) interacts with substrate.

This sequence belongs to the MetA family.

It localises to the cytoplasm. It carries out the reaction L-homoserine + succinyl-CoA = O-succinyl-L-homoserine + CoA. Its pathway is amino-acid biosynthesis; L-methionine biosynthesis via de novo pathway; O-succinyl-L-homoserine from L-homoserine: step 1/1. Functionally, transfers a succinyl group from succinyl-CoA to L-homoserine, forming succinyl-L-homoserine. This is Homoserine O-succinyltransferase from Yersinia pseudotuberculosis serotype O:1b (strain IP 31758).